The sequence spans 163 residues: Nucleotide-binding protein Dhaf_3127 (163 aa).

The protein belongs to the YajQ family.

Nucleotide-binding protein. This is Nucleotide-binding protein Dhaf_3127 from Desulfitobacterium hafniense (strain DSM 10664 / DCB-2).